Here is a 463-residue protein sequence, read N- to C-terminus: uncharacterized protein (463 aa).

The next 6 helical transmembrane spans lie at 3–23 (IPPE…SLLV), 88–108 (VAAA…AELA), 112–132 (AIHG…PIAL), 216–236 (FSPA…DFLW), 245–265 (LLLL…SALI), and 276–296 (LPIA…AVAV). The segment at 303-322 (VPGGSPPTSNPAPAAPSSNS) is disordered. Over residues 306 to 316 (GSPPTSNPAPA) the composition is skewed to pro residues. 2 helical membrane passes run 323–343 (VGSA…APPG) and 419–439 (AGTL…AGMV).

This sequence belongs to the mycobacterial PPE family.

It localises to the cell membrane. This is an uncharacterized protein from Mycobacterium tuberculosis (strain CDC 1551 / Oshkosh).